The chain runs to 434 residues: Serine hydroxymethyltransferase (434 aa).

Residues Leu-131 and 135 to 137 contribute to the (6S)-5,6,7,8-tetrahydrofolate site; that span reads GHL. Lys-240 carries the N6-(pyridoxal phosphate)lysine modification.

It belongs to the SHMT family. Homodimer. Requires pyridoxal 5'-phosphate as cofactor.

It localises to the cytoplasm. It catalyses the reaction (6R)-5,10-methylene-5,6,7,8-tetrahydrofolate + glycine + H2O = (6S)-5,6,7,8-tetrahydrofolate + L-serine. Its pathway is one-carbon metabolism; tetrahydrofolate interconversion. The protein operates within amino-acid biosynthesis; glycine biosynthesis; glycine from L-serine: step 1/1. In terms of biological role, catalyzes the reversible interconversion of serine and glycine with tetrahydrofolate (THF) serving as the one-carbon carrier. This reaction serves as the major source of one-carbon groups required for the biosynthesis of purines, thymidylate, methionine, and other important biomolecules. Also exhibits THF-independent aldolase activity toward beta-hydroxyamino acids, producing glycine and aldehydes, via a retro-aldol mechanism. This Gluconobacter oxydans (strain 621H) (Gluconobacter suboxydans) protein is Serine hydroxymethyltransferase.